Consider the following 469-residue polypeptide: Bile acid receptor (469 aa).

Residue Lys-119 forms a Glycyl lysine isopeptide (Lys-Gly) (interchain with G-Cter in SUMO1) linkage. Positions 121 to 196 (DELCVVCGDR…MGMLAECLLT (76 aa)) form a DNA-binding region, nuclear receptor. An NR C4-type zinc finger spans residues 124-144 (CVVCGDRASGYHYNALTCEGC). A phosphoserine; by PKC/PRKCA mark is found at Ser-132 and Ser-151. Lys-154 is subject to N6-acetyllysine; by EP300. The segment at 160–184 (CKNGGNCVMDMYMRRKCQDCRLRKC) adopts an NR C4-type zinc-finger fold. The residue at position 203 (Lys-203) is an N6-methyllysine; by SETD7. At Lys-210 the chain carries N6-acetyllysine; by EP300. The NR LBD domain maps to 245 to 469 (DQQTLLDYIM…PLLCEIWDVQ (225 aa)). A Glycyl lysine isopeptide (Lys-Gly) (interchain with G-Cter in SUMO1) cross-link involves residue Lys-272. Residue Arg-328 coordinates 3beta,7beta-dihydroxy-5beta-cholan-24-oate. Chenodeoxycholate contacts are provided by Arg-328, Tyr-358, and Tyr-366. Tyr-366 provides a ligand contact to 3beta,7beta-dihydroxy-5beta-cholan-24-oate. Thr-439 carries the post-translational modification Phosphothreonine; by PKC/PRKCZ. His-444 is a chenodeoxycholate binding site.

It belongs to the nuclear hormone receptor family. NR1 subfamily. In terms of assembly, heterodimer with RXRA; the heterodimerization enhances the binding affinity for LXXLL motifs from coactivators. Binds DNA predominantly as a heterodimer with RXRA. After activation by agonist binding interacts with coactivators. Interacts with NCOA1, NCOA2, PPARGC1A, CARM1, SETD7, PRMT1, GPS2, SMARCA4 and MED1, EP300 and SMARCD1. Interacts with XRCC5 and XRCC6; decreasing NR1H4/FXR transactivation activity towards ABCB11/BSEP. Interacts with PAGR1 AND NCOA6; indicative for an association with an MLL2/MLL3 complex (ASCOM). In terms of processing, acetylated by EP300. Lys-210 as is the major acetylation site for EP300; the dynamicly regulated acetylation inhibits heterodimerization with RXRA and transactivation activity. Deacetylated by SIRT1. Methylation may increase transactivation of target genes. Post-translationally, phosphorylation by PKC/PRKCA increases transactivation activity by promoting association with PPARGC1A. In terms of processing, sumoylated upon ligand binding.

The protein resides in the nucleus. Its function is as follows. Ligand-activated transcription factor. Receptor for bile acids (BAs) such as chenodeoxycholic acid (CDCA), lithocholic acid, deoxycholic acid (DCA) and allocholic acid (ACA). Plays a essential role in BA homeostasis through the regulation of genes involved in BA synthesis, conjugation and enterohepatic circulation. Also regulates lipid and glucose homeostasis and is involved innate immune response. The FXR-RXR heterodimer binds predominantly to farnesoid X receptor response elements (FXREs) containing two inverted repeats of the consensus sequence 5'-AGGTCA-3' in which the monomers are spaced by 1 nucleotide (IR-1) but also to tandem repeat DR1 sites with lower affinity, and can be activated by either FXR or RXR-specific ligands. It is proposed that monomeric nuclear receptors such as NR5A2/LRH-1 bound to coregulatory nuclear responsive element (NRE) halfsites located in close proximity to FXREs modulate transcriptional activity. In the liver activates transcription of the corepressor NR0B2 thereby indirectly inhibiting CYP7A1 and CYP8B1 (involved in BA synthesis) implicating at least in part histone demethylase KDM1A resulting in epigenomic repression, and SLC10A1/NTCP (involved in hepatic uptake of conjugated BAs). Activates transcription of the repressor MAFG (involved in regulation of BA synthesis). Activates transcription of SLC27A5/BACS and BAAT (involved in BA conjugation), ABCB11/BSEP (involved in bile salt export) by directly recruiting histone methyltransferase CARM1, and ABCC2/MRP2 (involved in secretion of conjugated BAs) and ABCB4 (involved in secretion of phosphatidylcholine in the small intestine). Activates transcription of SLC27A5/BACS and BAAT (involved in BA conjugation), ABCB11/BSEP (involved in bile salt export) by directly recruiting histone methyltransferase CARM1, and ABCC2/MRP2 (involved in secretion of conjugated BAs) and ABCB4 (involved in secretion of phosphatidylcholine in the small intestine). In the intestine activates FGF19 expression and secretion leading to hepatic CYP7A1 repression. The function also involves the coordinated induction of hepatic KLB/beta-klotho expression. Regulates transcription of liver UGT2B4 and SULT2A1 involved in BA detoxification; binding to the UGT2B4 promoter seems to imply a monomeric transactivation independent of RXRA. Modulates lipid homeostasis by activating liver NR0B2/SHP-mediated repression of SREBF1 (involved in de novo lipogenesis), expression of PLTP (involved in HDL formation), SCARB1 (involved in HDL hepatic uptake), APOE, APOC1, APOC4, PPARA (involved in beta-oxidation of fatty acids), VLDLR and SDC1 (involved in the hepatic uptake of LDL and IDL remnants), and inhibiting expression of MTTP (involved in VLDL assembly). Increases expression of APOC2 (promoting lipoprotein lipase activity implicated in triglyceride clearance). Transrepresses APOA1 involving a monomeric competition with NR2A1 for binding to a DR1 element. Also reduces triglyceride clearance by inhibiting expression of ANGPTL3 and APOC3 (both involved in inhibition of lipoprotein lipase). Involved in glucose homeostasis by modulating hepatic gluconeogenesis through activation of NR0B2/SHP-mediated repression of respective genes. Modulates glycogen synthesis (inducing phosphorylation of glycogen synthase kinase-3). Modulates glucose-stimulated insulin secretion and is involved in insulin resistance. Involved in intestinal innate immunity. Plays a role in protecting the distal small intestine against bacterial overgrowth and preservation of the epithelial barrier. Down-regulates inflammatory cytokine expression in several types of immune cells including macrophages and mononuclear cells. Mediates trans-repression of TLR4-induced cytokine expression; the function seems to require its sumoylation and prevents N-CoR nuclear receptor corepressor clearance from target genes such as IL1B and NOS2. Involved in the TLR9-mediated protective mechanism in intestinal inflammation. Plays an anti-inflammatory role in liver inflammation; proposed to inhibit pro-inflammatory (but not antiapoptotic) NF-kappa-B signaling. This chain is Bile acid receptor (Nr1h4), found in Rattus norvegicus (Rat).